Consider the following 126-residue polypeptide: MAILGLGTDIVEIARIEAVIERSGERLARRVLTDAEWAHYQQHQQPVRFLAKRFAVKEAAAKAFGTGIRNGLAFNQFEVFNDELGKPCLRFFAKAAELAEQMGVRHVHVTLADERRYACATVIVES.

Mg(2+) is bound by residues Asp-9 and Glu-58.

It belongs to the P-Pant transferase superfamily. AcpS family. The cofactor is Mg(2+).

It is found in the cytoplasm. It catalyses the reaction apo-[ACP] + CoA = holo-[ACP] + adenosine 3',5'-bisphosphate + H(+). In terms of biological role, transfers the 4'-phosphopantetheine moiety from coenzyme A to a Ser of acyl-carrier-protein. In Pectobacterium carotovorum subsp. carotovorum (strain PC1), this protein is Holo-[acyl-carrier-protein] synthase.